Reading from the N-terminus, the 447-residue chain is N-succinylarginine dihydrolase (447 aa).

Residues 19–28 (AGLSFGNEAS), Asn110, and 137–138 (HR) contribute to the substrate site. Glu174 is a catalytic residue. Arg214 lines the substrate pocket. His250 is a catalytic residue. Positions 252 and 365 each coordinate substrate. The Nucleophile role is filled by Cys371.

This sequence belongs to the succinylarginine dihydrolase family. As to quaternary structure, homodimer.

It carries out the reaction N(2)-succinyl-L-arginine + 2 H2O + 2 H(+) = N(2)-succinyl-L-ornithine + 2 NH4(+) + CO2. Its pathway is amino-acid degradation; L-arginine degradation via AST pathway; L-glutamate and succinate from L-arginine: step 2/5. Functionally, catalyzes the hydrolysis of N(2)-succinylarginine into N(2)-succinylornithine, ammonia and CO(2). This chain is N-succinylarginine dihydrolase, found in Acinetobacter baumannii (strain SDF).